We begin with the raw amino-acid sequence, 474 residues long: tRNA-2-methylthio-N(6)-dimethylallyladenosine synthase (474 aa).

One can recognise an MTTase N-terminal domain in the interval Lys-3–Gln-120. 6 residues coordinate [4Fe-4S] cluster: Cys-12, Cys-49, Cys-83, Cys-157, Cys-161, and Cys-164. The Radical SAM core domain maps to Arg-143–Arg-375. A TRAM domain is found at Arg-378 to Arg-441.

This sequence belongs to the methylthiotransferase family. MiaB subfamily. In terms of assembly, monomer. It depends on [4Fe-4S] cluster as a cofactor.

Its subcellular location is the cytoplasm. The catalysed reaction is N(6)-dimethylallyladenosine(37) in tRNA + (sulfur carrier)-SH + AH2 + 2 S-adenosyl-L-methionine = 2-methylsulfanyl-N(6)-dimethylallyladenosine(37) in tRNA + (sulfur carrier)-H + 5'-deoxyadenosine + L-methionine + A + S-adenosyl-L-homocysteine + 2 H(+). Functionally, catalyzes the methylthiolation of N6-(dimethylallyl)adenosine (i(6)A), leading to the formation of 2-methylthio-N6-(dimethylallyl)adenosine (ms(2)i(6)A) at position 37 in tRNAs that read codons beginning with uridine. The chain is tRNA-2-methylthio-N(6)-dimethylallyladenosine synthase from Shewanella loihica (strain ATCC BAA-1088 / PV-4).